Here is a 627-residue protein sequence, read N- to C-terminus: Protein fem-1 homolog B (627 aa).

ANK repeat units lie at residues 45–74 (QRSTPLIIAARNGHAKVVRLLLEHYRVQTQ), 87–116 (DGATALWCAAGAGHFEVVKLLVSHGANVNH), 120–149 (TNSTPLRAACFDGRLDIVKYLVENNANISI), and 153–182 (YDNTCLMIAAYKGHTDVVRYLLEQRADPNA). H185, C186, and H218 together coordinate Zn(2+). ANK repeat units follow at residues 186 to 215 (CGATALHFAAEAGHIDIVKELIKWRAAIVV) and 218 to 248 (HGMTPLKVAAESCKADVVELLLSHADCDRRS). A TPR repeat occupies 344–377 (SHPIIYRGAVYADNMEFEQCIKLWLHALHLRQKG). 2 ANK repeats span residues 483 to 527 (EGFT…EVNA) and 531 to 568 (EGNSALHIIVQYNRPISDFLTLHSIIISLVEAGAHTDM).

This sequence belongs to the fem-1 family. Component of a CRL2 E3 ubiquitin-protein ligase complex, also named ECS (Elongin BC-CUL2/5-SOCS-box protein) complex, composed of CUL2, Elongin BC (ELOB and ELOC), RBX1 and substrate-specific adapter FEM1B. Homooligomer. Interacts with PPM1F and PHTF1. Interacts with the death domain of FAS/TNFRSF6 and TNFRSF1A. Interacts with CHEK1. Interacts with NKX3-1. Present in adult testis (at protein level).

Its subcellular location is the cytoplasm. The protein resides in the nucleus. It functions in the pathway protein modification; protein ubiquitination. Activity of the CRL2(FEM1B) complex toward FNIP1 is inhibited by BEX family proteins (BEX1, BEX2, BEX3 and/or BEX4) in absence of reductive stress. Mechanistically, BEX proteins act as pseudosubstrate inhibitors that associate with FEM1B via zinc in absence of reductive stress, thereby preventing association between FEM1B and FNIP1. Its function is as follows. Substrate-recognition component of a Cul2-RING (CRL2) E3 ubiquitin-protein ligase complex of the DesCEND (destruction via C-end degrons) pathway, which recognizes a C-degron located at the extreme C terminus of target proteins, leading to their ubiquitination and degradation. The C-degron recognized by the DesCEND pathway is usually a motif of less than ten residues and can be present in full-length proteins, truncated proteins or proteolytically cleaved forms. The CRL2(FEM1B) complex specifically recognizes proteins ending with -Gly-Leu-Asp-Arg, such as CDK5R1, leading to their ubiquitination and degradation. Also acts as a regulator of the reductive stress response by mediating ubiquitination of reduced FNIP1: in response to reductive stress, the CRL2(FEM1B) complex specifically recognizes a conserved Cys degron in FNIP1 when this degron is reduced, leading to FNIP1 degradation and subsequent activation of mitochondria to recalibrate reactive oxygen species (ROS). Mechanistically, recognizes and binds reduced FNIP1 through two interface zinc ions, which act as a molecular glue that recruit reduced FNIP1 to FEM1B. Promotes ubiquitination of GLI1, suppressing GLI1 transcriptional activator activity. Promotes ubiquitination and degradation of ANKRD37. Promotes ubiquitination and degradation of SLBP. Involved in apoptosis by acting as a death receptor-associated protein that mediates apoptosis. Also involved in glucose homeostasis in pancreatic islet. May also act as an adapter/mediator in replication stress-induced signaling that leads to the activation of CHEK1. This is Protein fem-1 homolog B from Rattus norvegicus (Rat).